Reading from the N-terminus, the 655-residue chain is MKKILIGLIIGLFLFSSVNASVNLTEVQNAISIQQGINWAEVHNNTWYYPPYLGEMFISEYYFELLVLNWTHKSAFNATYFTERLLQTQFEDGSWEQVREQNLETGQLDATVFNYWYLKSINNNPKIEAALQKARKWIVAQGGIEATQTMTKFKLAAFGQYSWEDLWYVPLFIFKQNGIFKYTYVKDIVAQWVYPHLTALAYLRYQRTVFNVPVADLRELWINYPKNGIKISPREYSTLNPDSDLLILMDEIFKLKQPLGSFGAYTISTLLTLMSFKDFQSKHPHLYQNEIQKAYEDGYYFVEFNYFNFREAYHGSLDDGRWWDTILISWAMLESGQDKERIFPIVQNMVKEGLQPKKGIGYGYDFEYAPDTDDTGLLLVVMSYYKEAFQKQIPETIEWLFSMQNDDGGYPAFDKGKNEDNLLFKFAFNMAGIANSAEIFDPSCPDITGHIMEGLGEFGYQANHPQIQNMIKYQRKTQNKWGSWQARWGVNYIMAVGAVVPGLARVNYDLNEQWVQNSINYLLNKQNKDGGFGECVLSYNDPEKWNGIGKSTVTQTSWGLLALLEVYNQNEQIKHAADRAAQYLLDQFKRDDNTFYDHSTIGTGHRGLLYLQYPSYAQSFPLVALNRYQKISQGQYHFSKNLYNGNGEPVQKQNI.

The first 20 residues, 1–20 (MKKILIGLIIGLFLFSSVNA), serve as a signal peptide directing secretion. Asn23, Asn44, Asn69, and Asn77 each carry an N-linked (GlcNAc...) asparagine glycan. The Proton donor role is filled by Asp373. 2 PFTB repeats span residues 393 to 435 (IPET…GIAN) and 515 to 562 (VQNS…GLLA).

The protein belongs to the terpene cyclase/mutase family.

It is found in the membrane. The enzyme catalyses tetrahymanol = squalene + H2O. 2,3-iminosqualene and N,N-dimethyldodecylamine~N-oxlde are effective inhibitors with IC(50) values of 50 and 30 nM, respectively. Functionally, squalene cyclase that catalyzes the oxygen-independent cyclization of squalene into tetrahymanol, a triterpenoid sterol with five cyclohexyl rings that is involved in membrane integrity, permeability and fluidity. The chain is Squalene-tetrahymanol cyclase THC1 from Tetrahymena thermophila (strain SB210).